A 269-amino-acid polypeptide reads, in one-letter code: Indole-3-glycerol phosphate synthase (269 aa).

This sequence belongs to the TrpC family.

The enzyme catalyses 1-(2-carboxyphenylamino)-1-deoxy-D-ribulose 5-phosphate + H(+) = (1S,2R)-1-C-(indol-3-yl)glycerol 3-phosphate + CO2 + H2O. The protein operates within amino-acid biosynthesis; L-tryptophan biosynthesis; L-tryptophan from chorismate: step 4/5. The chain is Indole-3-glycerol phosphate synthase from Roseiflexus sp. (strain RS-1).